A 175-amino-acid chain; its full sequence is MSERIILDDAAIQRTITRIAHEILEYNKGTKDLVLLGIKTRGAFLAHRIQDKINSIEQQLVPTGTIDITHFRDDVDKVVQQADQRAFDINVDINNKVVVIIDDVLYTGRTVRASLDAILLHTRPIKIGLAALVDRGHRELPIRADFVGKNIPTARDESVSVYLEEIDDRNAVVIE.

Substrate is bound by residues 40–41 (TR), Arg85, 102–110 (DDVLYTGRT), Arg135, and Val159. Residues 98-110 (VVIIDDVLYTGRT) carry the PRPP-binding motif.

Belongs to the purine/pyrimidine phosphoribosyltransferase family. PyrR subfamily. As to quaternary structure, homodimer and homohexamer; in equilibrium.

It carries out the reaction UMP + diphosphate = 5-phospho-alpha-D-ribose 1-diphosphate + uracil. Regulates transcriptional attenuation of the pyrimidine nucleotide (pyr) operon by binding in a uridine-dependent manner to specific sites on pyr mRNA. This disrupts an antiterminator hairpin in the RNA and favors formation of a downstream transcription terminator, leading to a reduced expression of downstream genes. In terms of biological role, also displays a weak uracil phosphoribosyltransferase activity which is not physiologically significant. The chain is Bifunctional protein PyrR from Staphylococcus epidermidis (strain ATCC 35984 / DSM 28319 / BCRC 17069 / CCUG 31568 / BM 3577 / RP62A).